Consider the following 103-residue polypeptide: N(4)-acetylcytidine amidohydrolase (103 aa).

The 87-residue stretch at 7–93 folds into the ASCH domain; the sequence is TFFERFEQDI…VIAEIYPGLE (87 aa). The Proton acceptor role is filled by lysine 21. The active-site Nucleophile is threonine 24. The active-site Proton donor is glutamate 74.

Belongs to the N(4)-acetylcytidine amidohydrolase family.

It carries out the reaction N(4)-acetylcytidine + H2O = cytidine + acetate + H(+). The catalysed reaction is N(4)-acetyl-2'-deoxycytidine + H2O = 2'-deoxycytidine + acetate + H(+). It catalyses the reaction N(4)-acetylcytosine + H2O = cytosine + acetate + H(+). Functionally, catalyzes the hydrolysis of N(4)-acetylcytidine (ac4C). The polypeptide is N(4)-acetylcytidine amidohydrolase (Shewanella putrefaciens (strain CN-32 / ATCC BAA-453)).